Consider the following 359-residue polypeptide: NADH-quinone oxidoreductase subunit H (359 aa).

A run of 8 helical transmembrane segments spans residues 19 to 39, 94 to 114, 127 to 147, 166 to 186, 202 to 222, 266 to 286, 301 to 321, and 337 to 357; these read IGWF…FIAL, FLFV…FAVL, VGLF…LAAG, IVSY…LAGT, FMHW…IYFI, MFMV…SPLP, VWGA…QMWL, and CWKV…IWVI.

Belongs to the complex I subunit 1 family. As to quaternary structure, NDH-1 is composed of 14 different subunits. Subunits NuoA, H, J, K, L, M, N constitute the membrane sector of the complex.

It is found in the cell inner membrane. It catalyses the reaction a quinone + NADH + 5 H(+)(in) = a quinol + NAD(+) + 4 H(+)(out). In terms of biological role, NDH-1 shuttles electrons from NADH, via FMN and iron-sulfur (Fe-S) centers, to quinones in the respiratory chain. The immediate electron acceptor for the enzyme in this species is believed to be ubiquinone. Couples the redox reaction to proton translocation (for every two electrons transferred, four hydrogen ions are translocated across the cytoplasmic membrane), and thus conserves the redox energy in a proton gradient. This subunit may bind ubiquinone. This Chlorobaculum parvum (strain DSM 263 / NCIMB 8327) (Chlorobium vibrioforme subsp. thiosulfatophilum) protein is NADH-quinone oxidoreductase subunit H.